A 229-amino-acid chain; its full sequence is Cytochrome c oxidase subunit 2 (229 aa).

The Mitochondrial intermembrane segment spans residues 1 to 26 (MSTWANLGLQDSASPLMEQLIFFHDH). A helical membrane pass occupies residues 27–48 (ALLILVMITILVGYLMFMLFFN). The Mitochondrial matrix portion of the chain corresponds to 49–62 (SYINRFLLHGQLIE). Residues 63–82 (MIWTILPAIILLFIAMPSLR) form a helical membrane-spanning segment. The Mitochondrial intermembrane portion of the chain corresponds to 83-229 (LLYLLDEINE…IKWIASKVNS (147 aa)). Cu cation-binding residues include H161, C196, E198, C200, H204, and M207. E198 is a binding site for Mg(2+).

Belongs to the cytochrome c oxidase subunit 2 family. In terms of assembly, component of the cytochrome c oxidase (complex IV, CIV), a multisubunit enzyme composed of a catalytic core of 3 subunits and several supernumerary subunits. The complex exists as a monomer or a dimer and forms supercomplexes (SCs) in the inner mitochondrial membrane with ubiquinol-cytochrome c oxidoreductase (cytochrome b-c1 complex, complex III, CIII). Cu cation is required as a cofactor.

The protein localises to the mitochondrion inner membrane. It carries out the reaction 4 Fe(II)-[cytochrome c] + O2 + 8 H(+)(in) = 4 Fe(III)-[cytochrome c] + 2 H2O + 4 H(+)(out). In terms of biological role, component of the cytochrome c oxidase, the last enzyme in the mitochondrial electron transport chain which drives oxidative phosphorylation. The respiratory chain contains 3 multisubunit complexes succinate dehydrogenase (complex II, CII), ubiquinol-cytochrome c oxidoreductase (cytochrome b-c1 complex, complex III, CIII) and cytochrome c oxidase (complex IV, CIV), that cooperate to transfer electrons derived from NADH and succinate to molecular oxygen, creating an electrochemical gradient over the inner membrane that drives transmembrane transport and the ATP synthase. Cytochrome c oxidase is the component of the respiratory chain that catalyzes the reduction of oxygen to water. Electrons originating from reduced cytochrome c in the intermembrane space (IMS) are transferred via the dinuclear copper A center (CU(A)) of subunit 2 and heme A of subunit 1 to the active site in subunit 1, a binuclear center (BNC) formed by heme A3 and copper B (CU(B)). The BNC reduces molecular oxygen to 2 water molecules using 4 electrons from cytochrome c in the IMS and 4 protons from the mitochondrial matrix. The protein is Cytochrome c oxidase subunit 2 (mt:CoII) of Drosophila bifasciata (Fruit fly).